A 376-amino-acid chain; its full sequence is Putative glutamate--cysteine ligase 2 (376 aa).

It belongs to the glutamate--cysteine ligase type 2 family. YbdK subfamily.

The catalysed reaction is L-cysteine + L-glutamate + ATP = gamma-L-glutamyl-L-cysteine + ADP + phosphate + H(+). In terms of biological role, ATP-dependent carboxylate-amine ligase which exhibits weak glutamate--cysteine ligase activity. The chain is Putative glutamate--cysteine ligase 2 from Mycobacterium bovis (strain ATCC BAA-935 / AF2122/97).